The following is a 332-amino-acid chain: MTRFLDSDAMGDEELVERTLRPQYLREYIGQDKVKDQLKIFIEAAKLRDESLDHVLLFGPPGLGKTTMAFVIANELGVNLKQTSGPAIEKSGDLVAILNDLEPGDVLFIDEIHRMPMAVEEVLYSAMEDFYIDIMIGAGETSRSVHLDLPPFTLIGATTRAGMLSNPLRARFGITGHMEYYEENDLTEIIERTADIFEMKITYEAASELARRSRGTPRIANRLLKRVRDYAQIMGDGLIDDNITDKALTMLDVDHEGLDYVDQKILRTMIEMYNGGPVGLGTLSVNIAEERDTVEDMYEPYLIQKGFIMRTRTGRVATVKAYEHLGYQRFDK.

The large ATPase domain (RuvB-L) stretch occupies residues 1–181; that stretch reads MTRFLDSDAM…FGITGHMEYY (181 aa). ATP is bound by residues Leu20, Arg21, Gly62, Lys65, Thr66, Thr67, 128 to 130, Arg171, Tyr181, and Arg218; that span reads EDF. Thr66 serves as a coordination point for Mg(2+). A small ATPAse domain (RuvB-S) region spans residues 182–252; it reads EENDLTEIIE…ITDKALTMLD (71 aa). The tract at residues 255–332 is head domain (RuvB-H); it reads HEGLDYVDQK…EHLGYQRFDK (78 aa). 4 residues coordinate DNA: Arg291, Arg310, Arg312, and Arg315.

Belongs to the RuvB family. In terms of assembly, homohexamer. Forms an RuvA(8)-RuvB(12)-Holliday junction (HJ) complex. HJ DNA is sandwiched between 2 RuvA tetramers; dsDNA enters through RuvA and exits via RuvB. An RuvB hexamer assembles on each DNA strand where it exits the tetramer. Each RuvB hexamer is contacted by two RuvA subunits (via domain III) on 2 adjacent RuvB subunits; this complex drives branch migration. In the full resolvosome a probable DNA-RuvA(4)-RuvB(12)-RuvC(2) complex forms which resolves the HJ.

The protein localises to the cytoplasm. It catalyses the reaction ATP + H2O = ADP + phosphate + H(+). Its function is as follows. The RuvA-RuvB-RuvC complex processes Holliday junction (HJ) DNA during genetic recombination and DNA repair, while the RuvA-RuvB complex plays an important role in the rescue of blocked DNA replication forks via replication fork reversal (RFR). RuvA specifically binds to HJ cruciform DNA, conferring on it an open structure. The RuvB hexamer acts as an ATP-dependent pump, pulling dsDNA into and through the RuvAB complex. RuvB forms 2 homohexamers on either side of HJ DNA bound by 1 or 2 RuvA tetramers; 4 subunits per hexamer contact DNA at a time. Coordinated motions by a converter formed by DNA-disengaged RuvB subunits stimulates ATP hydrolysis and nucleotide exchange. Immobilization of the converter enables RuvB to convert the ATP-contained energy into a lever motion, pulling 2 nucleotides of DNA out of the RuvA tetramer per ATP hydrolyzed, thus driving DNA branch migration. The RuvB motors rotate together with the DNA substrate, which together with the progressing nucleotide cycle form the mechanistic basis for DNA recombination by continuous HJ branch migration. Branch migration allows RuvC to scan DNA until it finds its consensus sequence, where it cleaves and resolves cruciform DNA. This chain is Holliday junction branch migration complex subunit RuvB, found in Streptococcus agalactiae serotype V (strain ATCC BAA-611 / 2603 V/R).